The sequence spans 282 residues: MVTYALLGATGATGSSILRHLLHESPDSLRIQILVRSKVKLLQAFPNLQTTRNPQVHVIQGTSTDPDALSECLRNASIVFMCVAQNGSPIGTTLCQDSARAIISVLQQQQQSQGASYQPCTIVQLRSASLNPALAAQVPAFVHRIVSFCLFANYADIKKACQYYSQAQKQGILEYILVDPPTLHDANGTQPTGYRLISTESQATALSYADLGAAMCEIAHRQSEFHGRAVGVTATGRVRQAWGVLLRHLLEGGSARLREKIAQETVVDGVVFAFLVVLAYLM.

The protein belongs to the avfA family.

Its pathway is mycotoxin biosynthesis; aflatoxin biosynthesis. Involved in the conversion of averufin (AVF) to versiconal hemiacetal acetate (VHA) in the aflatoxin biosynthesis pathway. The chain is Averufin oxidase A (avfA) from Aspergillus flavus (strain ATCC 200026 / FGSC A1120 / IAM 13836 / NRRL 3357 / JCM 12722 / SRRC 167).